The following is a 147-amino-acid chain: MTEIVEIFTDGACRGNPGPGGWGALLCYQGREKTLSGAESKTTNNRMELMAAIRALETLKRPCRVHLTTDSQYLRQGITCWLSNWKRRGWKTANRQPVKNIDLWQRLDQVAAQHRIEWFWVRGHEGHPGNERADALARSAITNGEEK.

In terms of domain architecture, RNase H type-1 spans M1–T142. Mg(2+) contacts are provided by D10, E48, D70, and D134.

It belongs to the RNase H family. As to quaternary structure, monomer. It depends on Mg(2+) as a cofactor.

Its subcellular location is the cytoplasm. It carries out the reaction Endonucleolytic cleavage to 5'-phosphomonoester.. Its function is as follows. Endonuclease that specifically degrades the RNA of RNA-DNA hybrids. The chain is Ribonuclease H from Nitrosococcus oceani (strain ATCC 19707 / BCRC 17464 / JCM 30415 / NCIMB 11848 / C-107).